Reading from the N-terminus, the 151-residue chain is Immunity protein YezG (151 aa).

Residues 62 to 90 (KDIFKTLLRELRELFEELRTEHRNNNDDV) adopt a coiled-coil conformation.

Interacts with cognate toxin YeeF but not with non-cognate toxin YobL. The interaction probably inhibits the toxic activity of YeeF. May bind with a stoichiometry of 2:2 to YeeF.

Its subcellular location is the cytoplasm. Functionally, immunity component of one of 6 LXG toxin-immunity modules in this strain. They promote kin selection, mediate competition in biofilms, and drive spatial segregation of different strains, indicating that LXG toxins may help avoid warfare between strains in biofilms. Mediates intercellular competition during biofilm formation; disruption of the operon disadvantages the bacteria, but overexpression of the cognate immunity protein restores growth in competition with wild-type. In situ neutralizes the toxic effect of cognate toxin YeeF. Probably neutralizes the ability to inhibit growth of cognate toxin YeeF. Probably does not have immunity protein activity on other LXG toxins. The chain is Immunity protein YezG (yezG) from Bacillus subtilis (strain 168).